Reading from the N-terminus, the 217-residue chain is RIRARYPIIAAHLAPGSESRFDFQKYVNRSLEDDFKVVVGISPILWFFAVLFLLSNTHGWVAYLWLPFIPLIIILVVGTKLQVIITQLGLSIQDRGDVVKGAPVVQPGDDLFWFGRPRLVLFLIHFCLFQNAFQLAFFIWSVYEFGIKTCFHEKTEDIVRASGLVPNRDTSATQTTELSKGKLMMADTCLPTEDLVGMVVTAAHSGKRFFVDSIRYD.

The next 3 helical transmembrane spans lie at 35-55 (FKVV…FLLS), 59-79 (GWVA…VVGT), and 119-139 (LVLF…AFFI).

The protein belongs to the MLO family.

It is found in the membrane. Its function is as follows. May be involved in modulation of pathogen defense and leaf cell death. In Linum usitatissimum (Flax), this protein is MLO-like protein.